A 205-amino-acid polypeptide reads, in one-letter code: uncharacterized protein (205 aa).

Helical transmembrane passes span 4–24 (LAFL…AIDD), 105–125 (KWFI…LWIL), 130–150 (FLLF…KIPN), 151–171 (WLFN…VPEC), and 182–202 (ITIP…KFII).

It localises to the cell membrane. This is an uncharacterized protein from Methanocaldococcus jannaschii (strain ATCC 43067 / DSM 2661 / JAL-1 / JCM 10045 / NBRC 100440) (Methanococcus jannaschii).